The primary structure comprises 448 residues: Probable glycine dehydrogenase (decarboxylating) subunit 1 (448 aa).

Belongs to the GcvP family. N-terminal subunit subfamily. As to quaternary structure, the glycine cleavage system is composed of four proteins: P, T, L and H. In this organism, the P 'protein' is a heterodimer of two subunits.

The enzyme catalyses N(6)-[(R)-lipoyl]-L-lysyl-[glycine-cleavage complex H protein] + glycine + H(+) = N(6)-[(R)-S(8)-aminomethyldihydrolipoyl]-L-lysyl-[glycine-cleavage complex H protein] + CO2. The glycine cleavage system catalyzes the degradation of glycine. The P protein binds the alpha-amino group of glycine through its pyridoxal phosphate cofactor; CO(2) is released and the remaining methylamine moiety is then transferred to the lipoamide cofactor of the H protein. In Rhodospirillum rubrum (strain ATCC 11170 / ATH 1.1.1 / DSM 467 / LMG 4362 / NCIMB 8255 / S1), this protein is Probable glycine dehydrogenase (decarboxylating) subunit 1.